The chain runs to 245 residues: tRNA pseudouridine synthase A (245 aa).

The Nucleophile role is filled by Asp-52. A substrate-binding site is contributed by Tyr-111.

This sequence belongs to the tRNA pseudouridine synthase TruA family. As to quaternary structure, homodimer.

It catalyses the reaction uridine(38/39/40) in tRNA = pseudouridine(38/39/40) in tRNA. In terms of biological role, formation of pseudouridine at positions 38, 39 and 40 in the anticodon stem and loop of transfer RNAs. The sequence is that of tRNA pseudouridine synthase A from Rhodopseudomonas palustris (strain BisB5).